The primary structure comprises 215 residues: ATP phosphoribosyltransferase (215 aa).

This sequence belongs to the ATP phosphoribosyltransferase family. Short subfamily. In terms of assembly, heteromultimer composed of HisG and HisZ subunits.

Its subcellular location is the cytoplasm. The catalysed reaction is 1-(5-phospho-beta-D-ribosyl)-ATP + diphosphate = 5-phospho-alpha-D-ribose 1-diphosphate + ATP. The protein operates within amino-acid biosynthesis; L-histidine biosynthesis; L-histidine from 5-phospho-alpha-D-ribose 1-diphosphate: step 1/9. Functionally, catalyzes the condensation of ATP and 5-phosphoribose 1-diphosphate to form N'-(5'-phosphoribosyl)-ATP (PR-ATP). Has a crucial role in the pathway because the rate of histidine biosynthesis seems to be controlled primarily by regulation of HisG enzymatic activity. The polypeptide is ATP phosphoribosyltransferase (Prochlorococcus marinus (strain MIT 9215)).